Reading from the N-terminus, the 386-residue chain is 2-isopropylmalate synthase (386 aa).

Residues 12-265 enclose the Pyruvate carboxyltransferase domain; sequence VRIFDTTLRD…EVNIKTYKLY (254 aa). Aspartate 21, histidine 203, histidine 205, and asparagine 239 together coordinate a divalent metal cation.

The protein belongs to the alpha-IPM synthase/homocitrate synthase family. As to quaternary structure, homodimer. The cofactor is a divalent metal cation.

The catalysed reaction is 3-methyl-2-oxobutanoate + acetyl-CoA + H2O = (2S)-2-isopropylmalate + CoA + H(+). Its pathway is amino-acid biosynthesis; L-leucine biosynthesis; L-leucine from 3-methyl-2-oxobutanoate: step 1/4. Its function is as follows. Catalyzes the condensation of the acetyl group of acetyl-CoA with 3-methyl-2-oxobutanoate (2-oxoisovalerate) to form 3-carboxy-3-hydroxy-4-methylpentanoate (2-isopropylmalate). Carries out the first step of the leucine biosynthesis pathway. The protein is 2-isopropylmalate synthase (leuA) of Sulfurisphaera tokodaii (strain DSM 16993 / JCM 10545 / NBRC 100140 / 7) (Sulfolobus tokodaii).